The sequence spans 472 residues: Chitobiosyldiphosphodolichol beta-mannosyltransferase (472 aa).

At 1–20 (MEEFQFIKYKGFDHVFKYSG) the chain is on the lumenal side. Residues 21–41 (PWLWWLVGFYLCLPILAYTLL) form a helical membrane-spanning segment. Residues 42–118 (PYLTMNGTIS…PITVTKNTSN (77 aa)) lie on the Cytoplasmic side of the membrane. An intramembrane region (helical) is located at residues 119–139 (LPFILFAAKKMVVQFFQLLKL). Over 140–472 (LSDFRGTDYV…MGKRFEYSTD (333 aa)) the chain is Cytoplasmic.

This sequence belongs to the glycosyltransferase group 1 family.

The protein localises to the endoplasmic reticulum membrane. It catalyses the reaction an N,N'-diacetylchitobiosyl-diphospho-di-trans,poly-cis-dolichol + GDP-alpha-D-mannose = a beta-D-Man-(1-&gt;4)-beta-D-GlcNAc-(1-&gt;4)-alpha-D-GlcNAc-diphospho-di-trans,poly-cis-dolichol + GDP + H(+). Its pathway is protein modification; protein glycosylation. Its function is as follows. Participates in the formation of the lipid-linked precursor oligosaccharide for N-glycosylation. Involved in assembling the dolichol-pyrophosphate-GlcNAc(2)-Man(5) intermediate on the cytoplasmic surface of the ER. The protein is Chitobiosyldiphosphodolichol beta-mannosyltransferase (ALG1) of Debaryomyces hansenii (strain ATCC 36239 / CBS 767 / BCRC 21394 / JCM 1990 / NBRC 0083 / IGC 2968) (Yeast).